A 91-amino-acid polypeptide reads, in one-letter code: Probable Fe(2+)-trafficking protein (91 aa).

This sequence belongs to the Fe(2+)-trafficking protein family.

Could be a mediator in iron transactions between iron acquisition and iron-requiring processes, such as synthesis and/or repair of Fe-S clusters in biosynthetic enzymes. The polypeptide is Probable Fe(2+)-trafficking protein (Acidobacterium capsulatum (strain ATCC 51196 / DSM 11244 / BCRC 80197 / JCM 7670 / NBRC 15755 / NCIMB 13165 / 161)).